The primary structure comprises 2068 residues: Lipoxygenase homology domain-containing protein 1 (2068 aa).

PLAT domains follow at residues 43 to 160, 172 to 287, 296 to 412, 425 to 540, 553 to 673, 684 to 803, 814 to 934, 970 to 1088, 1101 to 1226, 1255 to 1373, 1422 to 1540, 1553 to 1668, 1680 to 1798, 1811 to 1932, and 1949 to 2065; these read KVYE…RDLL, NKYE…RDIL, ITYI…RQLY, YPWS…REMT, ARYR…RELL, FRYH…VELY, VHYE…RELL, TTFS…RDLF, VPYE…RELV, VLYS…RLFY, IPYY…RVFD, VLYE…CEIC, TSYT…RDFA, TTYE…VFEV, and VKYE…RELF.

Expressed in the inner ear, specifically in hair cells. Higher expression is detected in the cochlea.

The protein localises to the cell projection. Its subcellular location is the stereocilium. Required for normal function of hair cells in the inner ear. In Mus musculus (Mouse), this protein is Lipoxygenase homology domain-containing protein 1 (Loxhd1).